The chain runs to 391 residues: Somatostatin receptor type 1 (391 aa).

Positions 1–11 (MFPNGTASSPS) are enriched in low complexity. The interval 1–49 (MFPNGTASSPSSPSPSPGSCGEGGGSRGPGAGAADGMEEPGRNASQNGT) is disordered. Residues 1 to 55 (MFPNGTASSPSSPSPSPGSCGEGGGSRGPGAGAADGMEEPGRNASQNGTLSEGQG) lie on the Extracellular side of the membrane. The N-linked (GlcNAc...) asparagine glycan is linked to asparagine 4. Residues 20–33 (CGEGGGSRGPGAGA) show a composition bias toward gly residues. 2 N-linked (GlcNAc...) asparagine glycosylation sites follow: asparagine 43 and asparagine 47. The helical transmembrane segment at 56–83 (SAILISFIYSVVCLVGLCGNSMVIYVIL) threads the bilayer. The Cytoplasmic portion of the chain corresponds to 84–93 (RYAKMKTATN). A helical transmembrane segment spans residues 94 to 119 (IYILNLAIADELLMLSVPFLVTSTLL). Topologically, residues 120 to 130 (RHWPFGALLCR) are extracellular. Cysteine 129 and cysteine 207 are oxidised to a cystine. Residues 131 to 152 (LVLSVDAVNMFTSIYCLTVLSV) form a helical membrane-spanning segment. Residues 153-174 (DRYVAVVHPIKAARYRRPTVAK) lie on the Cytoplasmic side of the membrane. A helical transmembrane segment spans residues 175 to 195 (VVNLGVWVLSLLVILPIVVFS). The Extracellular portion of the chain corresponds to 196–218 (RTAANSDGTVACNMLMPEPAQRW). A helical membrane pass occupies residues 219–243 (LVGFVLYTFLMGFLLPVGAICLCYV). Over 244 to 269 (LIIAKMRMVALKAGWQQRKRSERKIT) the chain is Cytoplasmic. A helical transmembrane segment spans residues 270–295 (LMVMMVVMVFVICWMPFYVVQLVNVF). Residues 296–302 (AEQDDAT) are Extracellular-facing. Residues 303-326 (VSQLSVILGYANSCANPILYGFLS) traverse the membrane as a helical segment. Residues 327–391 (DNFKRSFQRI…GTCTSRITTL (65 aa)) are Cytoplasmic-facing. The S-palmitoyl cysteine moiety is linked to residue cysteine 338.

Belongs to the G-protein coupled receptor 1 family. Interacts with SKB1.

The protein localises to the cell membrane. Receptor for somatostatin with higher affinity for somatostatin-14 than -28. This receptor is coupled via pertussis toxin sensitive G proteins to inhibition of adenylyl cyclase. In addition it stimulates phosphotyrosine phosphatase and Na(+)/H(+) exchanger via pertussis toxin insensitive G proteins. This chain is Somatostatin receptor type 1 (SSTR1), found in Canis lupus familiaris (Dog).